We begin with the raw amino-acid sequence, 172 residues long: MPLRASEHAYRPLGPGTPPMRARLPAAAWVGVGTIIGGVVIIAALVLVPSRASWALSPCDSGWHEFNLGCISWDPTPMEHEQAVGGCSAPATLIPRAAAKQLAAVARVQSARSSGYWWVSGDGIRARLRLVDGVGGIDQFCEEPALRICYYPRSPGGFVQFVTSTRNALGLP.

Over 1–27 (MPLRASEHAYRPLGPGTPPMRARLPAA) the chain is Intravirion. Residues 28-48 (AWVGVGTIIGGVVIIAALVLV) form a helical; Signal-anchor for type II membrane protein membrane-spanning segment. Residues 49-172 (PSRASWALSP…TSTRNALGLP (124 aa)) are Virion surface-facing.

Belongs to the herpesviridae HHV-1 UL45 family.

Its subcellular location is the virion membrane. Its function is as follows. Important virulence factor of HSV neurotropism. Seems to be required for glycoprotein B-induced fusion. Dispensable for growth in vitro. This Human herpesvirus 1 (strain KOS) (HHV-1) protein is Envelope protein UL45.